Consider the following 432-residue polypeptide: Glutamate-1-semialdehyde 2,1-aminomutase (432 aa).

Position 270 is an N6-(pyridoxal phosphate)lysine (lysine 270).

This sequence belongs to the class-III pyridoxal-phosphate-dependent aminotransferase family. HemL subfamily. In terms of assembly, homodimer. Pyridoxal 5'-phosphate is required as a cofactor.

It is found in the cytoplasm. The catalysed reaction is (S)-4-amino-5-oxopentanoate = 5-aminolevulinate. It functions in the pathway porphyrin-containing compound metabolism; protoporphyrin-IX biosynthesis; 5-aminolevulinate from L-glutamyl-tRNA(Glu): step 2/2. The chain is Glutamate-1-semialdehyde 2,1-aminomutase from Acinetobacter baumannii (strain ATCC 17978 / DSM 105126 / CIP 53.77 / LMG 1025 / NCDC KC755 / 5377).